The chain runs to 340 residues: MSVFSQLAESSKQNPFSLPVRSGNCASAVSAPGQVEFGSGKYYAYCALGGVLSCGITHTAIVPLDLVKCRIQVNPEKYTGIATGFRTTIAEEGARALVKGWAPTLLGYSAQGLGKFGFYEIFKNVYADMLGEENAYLYRTSLYLAASASAEFFADILLAPMEATKVRIQTSPGAPPTLRGCAPMIYKAEGLTGFYKGLPPLWMRQIPYTMMKFACFEKTVEALYQYVVPKPRAECSKAEQLVVTFVAGYIAGVFCAIVSHPADTVVSKLNQDSQATAGGILKKLGFAGVWKGLVPRIIMIGTLTALQWFIYDSVKVALNLPRPPPPEMPASLKAKLAAQQ.

Residues 1–27 (MSVFSQLAESSKQNPFSLPVRSGNCAS) constitute a mitochondrion transit peptide. Solcar repeat units lie at residues 41-125 (KYYA…FKNV), 138-222 (YRTS…TVEA), and 239-317 (EQLV…VKVA). 6 helical membrane passes run 47 to 67 (ALGG…LDLV), 95 to 114 (RALV…QGLG), 141 to 161 (SLYL…LAPM), 200 to 220 (PLWM…EKTV), 241 to 261 (LVVT…VSHP), and 297 to 317 (IIMI…VKVA).

Belongs to the mitochondrial carrier (TC 2.A.29) family.

It is found in the mitochondrion inner membrane. Transport of phosphate groups from the cytosol to the mitochondrial matrix. The chain is Phosphate carrier protein, mitochondrial from Caenorhabditis elegans.